We begin with the raw amino-acid sequence, 483 residues long: Rhamnulokinase (483 aa).

11–15 contributes to the ATP binding site; that stretch reads ASSGR. Substrate contacts are provided by residues Gly79 and 234 to 236; that span reads HDT. Catalysis depends on Asp235, which acts as the Proton acceptor. Thr257 contributes to the ATP binding site. Position 294 (Asn294) interacts with substrate. Residue Gln302 coordinates ATP. The cysteines at positions 352 and 369 are disulfide-linked. Residue Gly401 participates in ATP binding.

It belongs to the rhamnulokinase family. Requires Mg(2+) as cofactor.

It catalyses the reaction L-rhamnulose + ATP = L-rhamnulose 1-phosphate + ADP + H(+). It functions in the pathway carbohydrate degradation; L-rhamnose degradation; glycerone phosphate from L-rhamnose: step 2/3. Functionally, involved in the catabolism of L-rhamnose (6-deoxy-L-mannose). Catalyzes the transfer of the gamma-phosphate group from ATP to the 1-hydroxyl group of L-rhamnulose to yield L-rhamnulose 1-phosphate. This Listeria monocytogenes serovar 1/2a (strain ATCC BAA-679 / EGD-e) protein is Rhamnulokinase.